We begin with the raw amino-acid sequence, 541 residues long: Arginine--tRNA ligase (541 aa).

A 'HIGH' region motif is present at residues 119–129; it reads ANPTGPLHIGH.

Belongs to the class-I aminoacyl-tRNA synthetase family. Monomer.

Its subcellular location is the cytoplasm. It carries out the reaction tRNA(Arg) + L-arginine + ATP = L-arginyl-tRNA(Arg) + AMP + diphosphate. The polypeptide is Arginine--tRNA ligase (Helicobacter pylori (strain HPAG1)).